Here is a 287-residue protein sequence, read N- to C-terminus: Elongation factor Ts (287 aa).

The interval 80–83 is involved in Mg(2+) ion dislocation from EF-Tu; the sequence is TDFL.

It belongs to the EF-Ts family.

It is found in the cytoplasm. Its function is as follows. Associates with the EF-Tu.GDP complex and induces the exchange of GDP to GTP. It remains bound to the aminoacyl-tRNA.EF-Tu.GTP complex up to the GTP hydrolysis stage on the ribosome. The sequence is that of Elongation factor Ts from Pseudomonas entomophila (strain L48).